We begin with the raw amino-acid sequence, 670 residues long: UvrABC system protein B (670 aa).

A Helicase ATP-binding domain is found at 51–433 (DGLKKGEPFQ…SSRVVEQIIR (383 aa)). An ATP-binding site is contributed by 64–71 (GVTGSGKT). The short motif at 117–140 (YYDYYQPESYLPAKDQYIEKDAMI) is the Beta-hairpin element. A Helicase C-terminal domain is found at 453–612 (DVMQEIRKIV…IVPTTIRKPI (160 aa)). The region spanning 631-666 (PNVIIELDAEMREAADRLDFERAIQVRELIKKLEKE) is the UVR domain.

It belongs to the UvrB family. In terms of assembly, forms a heterotetramer with UvrA during the search for lesions. Interacts with UvrC in an incision complex.

It localises to the cytoplasm. The UvrABC repair system catalyzes the recognition and processing of DNA lesions. A damage recognition complex composed of 2 UvrA and 2 UvrB subunits scans DNA for abnormalities. Upon binding of the UvrA(2)B(2) complex to a putative damaged site, the DNA wraps around one UvrB monomer. DNA wrap is dependent on ATP binding by UvrB and probably causes local melting of the DNA helix, facilitating insertion of UvrB beta-hairpin between the DNA strands. Then UvrB probes one DNA strand for the presence of a lesion. If a lesion is found the UvrA subunits dissociate and the UvrB-DNA preincision complex is formed. This complex is subsequently bound by UvrC and the second UvrB is released. If no lesion is found, the DNA wraps around the other UvrB subunit that will check the other stand for damage. The sequence is that of UvrABC system protein B from Methanosarcina mazei (strain ATCC BAA-159 / DSM 3647 / Goe1 / Go1 / JCM 11833 / OCM 88) (Methanosarcina frisia).